Reading from the N-terminus, the 402-residue chain is Flavohemoprotein (402 aa).

Residues 1 to 138 enclose the Globin domain; the sequence is MLSPEVRALV…LADLLIGRER (138 aa). H85 is a heme b binding site. Catalysis depends on charge relay system residues Y95 and E137. The segment at 149 to 402 is reductase; sequence GGWTGWRAFK…AEVFGTGGVA (254 aa). Residues 152-261 form the FAD-binding FR-type domain; that stretch reads TGWRAFKVVR…SPPQGDFTLD (110 aa). FAD is bound by residues Y190 and 206-209; that span reads RQYS. 274–279 contributes to the NADP(+) binding site; the sequence is GVGLTP. 395–398 is a binding site for FAD; the sequence is VFGT.

It belongs to the globin family. Two-domain flavohemoproteins subfamily. In the C-terminal section; belongs to the flavoprotein pyridine nucleotide cytochrome reductase family. Heme b is required as a cofactor. The cofactor is FAD.

The catalysed reaction is 2 nitric oxide + NADPH + 2 O2 = 2 nitrate + NADP(+) + H(+). It catalyses the reaction 2 nitric oxide + NADH + 2 O2 = 2 nitrate + NAD(+) + H(+). In terms of biological role, is involved in NO detoxification in an aerobic process, termed nitric oxide dioxygenase (NOD) reaction that utilizes O(2) and NAD(P)H to convert NO to nitrate, which protects the bacterium from various noxious nitrogen compounds. Therefore, plays a central role in the inducible response to nitrosative stress. The chain is Flavohemoprotein from Bordetella bronchiseptica (strain ATCC BAA-588 / NCTC 13252 / RB50) (Alcaligenes bronchisepticus).